The sequence spans 358 residues: Testis-specific serine/threonine-protein kinase 2 (358 aa).

The Protein kinase domain occupies 12-272; sequence YIVGINLGKG…IDEILSHSWL (261 aa). Residues 18–26 and lysine 41 each bind ATP; that span reads LGKGSYAKV. Aspartate 136 serves as the catalytic Proton acceptor. 2 stretches are compositionally biased toward basic and acidic residues: residues 296–315 and 329–358; these read DCKLDTRPGSRPEHRPDHKL and NEDRMEDRLAETSRAKDHHISGAEVEKAST. Residues 296-358 form a disordered region; the sequence is DCKLDTRPGS…SGAEVEKAST (63 aa).

The protein belongs to the protein kinase superfamily. CAMK Ser/Thr protein kinase family. As to quaternary structure, interacts with TSSK1B. Interacts with HSP90; this interaction stabilizes TSSK2. Mg(2+) serves as cofactor. Post-translationally, autophosphorylated. In terms of processing, ubiquitinated; HSP90 activity negatively regulates ubiquitination and degradation. In terms of tissue distribution, testis-specific. Expressed only in the spermatids postmeiotically at the final stages of cytodifferentiation in the seminiferous tubules (at protein level). Not detected in released sperms in the lumen of the seminiferous tubules. Also present in the epididymal sperm (at protein level).

It is found in the cytoplasm. The protein resides in the cytoskeleton. It localises to the microtubule organizing center. Its subcellular location is the centrosome. The protein localises to the centriole. It is found in the cytoplasmic vesicle. The protein resides in the secretory vesicle. It localises to the acrosome. It catalyses the reaction L-seryl-[protein] + ATP = O-phospho-L-seryl-[protein] + ADP + H(+). The catalysed reaction is L-threonyl-[protein] + ATP = O-phospho-L-threonyl-[protein] + ADP + H(+). With respect to regulation, activated by phosphorylation on Thr-174, potentially by autophosphorylation. Functionally, testis-specific serine/threonine-protein kinase required during spermatid development. Phosphorylates 'Ser-281' of TSKS and SPAG16. Involved in the late stages of spermatogenesis, during the reconstruction of the cytoplasm. During spermatogenesis, required for the transformation of a ring-shaped structure around the base of the flagellum originating from the chromatoid body. The chain is Testis-specific serine/threonine-protein kinase 2 (Tssk2) from Mus musculus (Mouse).